The following is a 106-amino-acid chain: Thioredoxin-2 (106 aa).

Positions 1–106 constitute a Thioredoxin domain; it reads MVYQVKDKAD…RLEDVIKANI (106 aa). Catalysis depends on nucleophile residues C32 and C35. C32 and C35 are joined by a disulfide.

Belongs to the thioredoxin family. Monomer.

Participates in various redox reactions through the reversible oxidation of its active center dithiol to a disulfide and catalyzes dithiol-disulfide exchange reactions. As a reducing substrate of peroxiredoxin 1, thioredoxin 2 is preferred over thioredoxin 1. The sequence is that of Thioredoxin-2 from Drosophila melanogaster (Fruit fly).